We begin with the raw amino-acid sequence, 173 residues long: Mediator of RNA polymerase II transcription subunit 10 (173 aa).

The segment covering 1-10 (MVQQQQQSQQ) has biased composition (low complexity). The disordered stretch occupies residues 1–42 (MVQQQQQSQQRMMELHERNDREKLARKTEKEREEERRKQEDD). Over residues 13–42 (MELHERNDREKLARKTEKEREEERRKQEDD) the composition is skewed to basic and acidic residues.

Belongs to the Mediator complex subunit 10 family. Component of the Mediator complex.

Its subcellular location is the nucleus. Its function is as follows. Component of the Mediator complex, a coactivator involved in the regulated transcription of nearly all RNA polymerase II-dependent genes. Mediator functions as a bridge to convey information from gene-specific regulatory proteins to the basal RNA polymerase II transcription machinery. Mediator is recruited to promoters by direct interactions with regulatory proteins and serves as a scaffold for the assembly of a functional preinitiation complex with RNA polymerase II and the general transcription factors. Required for germ cell development and for transcriptional activation of certain stage-specific inducible promoters. In Caenorhabditis elegans, this protein is Mediator of RNA polymerase II transcription subunit 10 (mdt-10).